A 486-amino-acid chain; its full sequence is UDP-N-acetylmuramate--L-alanine ligase (486 aa).

126-132 (GTHGKTS) is an ATP binding site.

It belongs to the MurCDEF family.

It is found in the cytoplasm. It catalyses the reaction UDP-N-acetyl-alpha-D-muramate + L-alanine + ATP = UDP-N-acetyl-alpha-D-muramoyl-L-alanine + ADP + phosphate + H(+). The protein operates within cell wall biogenesis; peptidoglycan biosynthesis. In terms of biological role, cell wall formation. The polypeptide is UDP-N-acetylmuramate--L-alanine ligase (Buchnera aphidicola subsp. Baizongia pistaciae (strain Bp)).